We begin with the raw amino-acid sequence, 103 residues long: N(4)-acetylcytidine amidohydrolase (103 aa).

Positions 6–94 (ITFFQRFQND…IAEIYPNQTQ (89 aa)) constitute an ASCH domain. K21 functions as the Proton acceptor in the catalytic mechanism. The active-site Nucleophile is T24. E74 functions as the Proton donor in the catalytic mechanism.

This sequence belongs to the N(4)-acetylcytidine amidohydrolase family.

The catalysed reaction is N(4)-acetylcytidine + H2O = cytidine + acetate + H(+). It catalyses the reaction N(4)-acetyl-2'-deoxycytidine + H2O = 2'-deoxycytidine + acetate + H(+). The enzyme catalyses N(4)-acetylcytosine + H2O = cytosine + acetate + H(+). Catalyzes the hydrolysis of N(4)-acetylcytidine (ac4C). The chain is N(4)-acetylcytidine amidohydrolase (yqfB) from Salmonella typhi.